A 256-amino-acid chain; its full sequence is DNA repair protein RecO (256 aa).

The protein belongs to the RecO family.

Involved in DNA repair and RecF pathway recombination. This chain is DNA repair protein RecO, found in Rhizobium etli (strain CIAT 652).